Here is a 59-residue protein sequence, read N- to C-terminus: UPF0181 protein YoaH (59 aa).

The protein belongs to the UPF0181 family.

This Escherichia coli O127:H6 (strain E2348/69 / EPEC) protein is UPF0181 protein YoaH.